A 132-amino-acid polypeptide reads, in one-letter code: uncharacterized protein (132 aa).

The segment at 113–132 (LDPQSPLHSPPLSTSPDSRR) is disordered.

This is an uncharacterized protein from Saccharomyces cerevisiae (strain ATCC 204508 / S288c) (Baker's yeast).